The following is a 447-amino-acid chain: Ribulose bisphosphate carboxylase large chain (447 aa).

Lys5 bears the N6,N6,N6-trimethyllysine mark. Positions 114 and 164 each coordinate substrate. The active-site Proton acceptor is the Lys166. Lys168 serves as a coordination point for substrate. Residues Lys192, Asp194, and Glu195 each coordinate Mg(2+). Lys192 is subject to N6-carboxylysine. The active-site Proton acceptor is the His285. Substrate contacts are provided by Arg286, His318, and Ser370.

The protein belongs to the RuBisCO large chain family. Type I subfamily. As to quaternary structure, heterohexadecamer of 8 large chains and 8 small chains; disulfide-linked. The disulfide link is formed within the large subunit homodimers. It depends on Mg(2+) as a cofactor. Post-translationally, the disulfide bond which can form in the large chain dimeric partners within the hexadecamer appears to be associated with oxidative stress and protein turnover.

The protein localises to the plastid. The protein resides in the chloroplast. It catalyses the reaction 2 (2R)-3-phosphoglycerate + 2 H(+) = D-ribulose 1,5-bisphosphate + CO2 + H2O. The enzyme catalyses D-ribulose 1,5-bisphosphate + O2 = 2-phosphoglycolate + (2R)-3-phosphoglycerate + 2 H(+). Functionally, ruBisCO catalyzes two reactions: the carboxylation of D-ribulose 1,5-bisphosphate, the primary event in carbon dioxide fixation, as well as the oxidative fragmentation of the pentose substrate in the photorespiration process. Both reactions occur simultaneously and in competition at the same active site. This chain is Ribulose bisphosphate carboxylase large chain, found in Camassia leichtlinii (Western quamash).